The chain runs to 249 residues: Triosephosphate isomerase (249 aa).

Substrate contacts are provided by Asn12 and Lys14. Lys14 is subject to N6-acetyllysine. At Tyr68 the chain carries 3'-nitrotyrosine. Ser80 is subject to Phosphoserine. Catalysis depends on His96, which acts as the Electrophile. Ser106 bears the Phosphoserine mark. Lys142 is covalently cross-linked (Glycyl lysine isopeptide (Lys-Gly) (interchain with G-Cter in SUMO1)). Lys149 is subject to N6-succinyllysine. At Lys156 the chain carries N6-acetyllysine; alternate. Residue Lys156 is modified to N6-succinyllysine; alternate. Ser159 carries the phosphoserine modification. Catalysis depends on Glu166, which acts as the Proton acceptor. The residue at position 173 (Thr173) is a Phosphothreonine. An N6-acetyllysine; alternate modification is found at Lys194. An N6-succinyllysine; alternate modification is found at Lys194. An N6-methyllysine; alternate modification is found at Lys194. The residue at position 198 (Ser198) is a Phosphoserine. Tyr209 carries the 3'-nitrotyrosine modification. The residue at position 212 (Ser212) is a Phosphoserine. Thr214 bears the Phosphothreonine mark. Ser223 carries the post-translational modification Phosphoserine. Lys238 carries the N6-acetyllysine modification.

This sequence belongs to the triosephosphate isomerase family. In terms of assembly, homodimer.

Its subcellular location is the cytoplasm. The catalysed reaction is dihydroxyacetone phosphate = methylglyoxal + phosphate. It carries out the reaction D-glyceraldehyde 3-phosphate = dihydroxyacetone phosphate. It functions in the pathway carbohydrate degradation; glycolysis; D-glyceraldehyde 3-phosphate from glycerone phosphate: step 1/1. Its pathway is carbohydrate biosynthesis; gluconeogenesis. Triosephosphate isomerase is an extremely efficient metabolic enzyme that catalyzes the interconversion between dihydroxyacetone phosphate (DHAP) and D-glyceraldehyde-3-phosphate (G3P) in glycolysis and gluconeogenesis. Functionally, it is also responsible for the non-negligible production of methylglyoxal a reactive cytotoxic side-product that modifies and can alter proteins, DNA and lipids. The chain is Triosephosphate isomerase (TPI1) from Bos taurus (Bovine).